Here is a 474-residue protein sequence, read N- to C-terminus: L-lactate permease (474 aa).

11 consecutive transmembrane segments (helical) span residues A4–F21, A28–I48, F63–G85, L105–I127, A142–T164, L177–L199, G209–Y231, S238–L255, F281–A303, W324–S346, and I387–L409.

This sequence belongs to the lactate permease family.

Its subcellular location is the cell membrane. Plays a role in L-lactate utilization. The protein is L-lactate permease (lctP) of Streptococcus iniae (Streptococcus shiloi).